The primary structure comprises 348 residues: Selenide, water dikinase (348 aa).

Residue Cys17 is part of the active site. ATP-binding positions include Lys20 and 48-50; that span reads TRD. Asp51 is a binding site for Mg(2+). ATP-binding positions include Asp68, Asp91, and 139–141; that span reads GHS. Position 91 (Asp91) interacts with Mg(2+). Residue Asp227 coordinates Mg(2+).

This sequence belongs to the selenophosphate synthase 1 family. Class I subfamily. As to quaternary structure, homodimer. Mg(2+) is required as a cofactor.

The enzyme catalyses hydrogenselenide + ATP + H2O = selenophosphate + AMP + phosphate + 2 H(+). Its function is as follows. Synthesizes selenophosphate from selenide and ATP. This Yersinia pestis protein is Selenide, water dikinase.